Here is a 362-residue protein sequence, read N- to C-terminus: Phosphoserine aminotransferase (362 aa).

Arg-43 provides a ligand contact to L-glutamate. Pyridoxal 5'-phosphate-binding positions include 77 to 78, Trp-103, Thr-153, Asp-173, and Gln-196; that span reads AR. Lys-197 is modified (N6-(pyridoxal phosphate)lysine).

It belongs to the class-V pyridoxal-phosphate-dependent aminotransferase family. SerC subfamily. Homodimer. The cofactor is pyridoxal 5'-phosphate.

It localises to the cytoplasm. The enzyme catalyses O-phospho-L-serine + 2-oxoglutarate = 3-phosphooxypyruvate + L-glutamate. The catalysed reaction is 4-(phosphooxy)-L-threonine + 2-oxoglutarate = (R)-3-hydroxy-2-oxo-4-phosphooxybutanoate + L-glutamate. It participates in amino-acid biosynthesis; L-serine biosynthesis; L-serine from 3-phospho-D-glycerate: step 2/3. Its pathway is cofactor biosynthesis; pyridoxine 5'-phosphate biosynthesis; pyridoxine 5'-phosphate from D-erythrose 4-phosphate: step 3/5. Catalyzes the reversible conversion of 3-phosphohydroxypyruvate to phosphoserine and of 3-hydroxy-2-oxo-4-phosphonooxybutanoate to phosphohydroxythreonine. The sequence is that of Phosphoserine aminotransferase from Legionella pneumophila subsp. pneumophila (strain Philadelphia 1 / ATCC 33152 / DSM 7513).